The primary structure comprises 616 residues: KIF-binding protein (616 aa).

The disordered stretch occupies residues 52 to 78 (EEEEESEAEGKEERRDGPESGGRRGES). Basic and acidic residues predominate over residues 59 to 78 (AEGKEERRDGPESGGRRGES).

It belongs to the KIF-binding protein family.

Its subcellular location is the cytoplasm. The protein resides in the cytoskeleton. Its function is as follows. Activator of KIF1B plus-end-directed microtubule motor activity. Required for organization of axonal microtubules, and axonal outgrowth and maintenance during peripheral and central nervous system development. This Xenopus tropicalis (Western clawed frog) protein is KIF-binding protein.